Consider the following 260-residue polypeptide: Dolichol-phosphate mannosyltransferase subunit 1 (260 aa).

A disordered region spans residues 1 to 20; it reads MAAEEASRSSPRFRREPKGR. A2 bears the N-acetylalanine mark. Position 9 is a phosphoserine (S9). Residues P32, Y34, E36, I63, D65, D118, A119, D120, R147, R234, and K240 each coordinate GDP-alpha-D-mannose. D120 serves as a coordination point for Mg(2+). A Mn(2+)-binding site is contributed by D120.

This sequence belongs to the glycosyltransferase 2 family. Component of the dolichol-phosphate mannose (DPM) synthase complex composed of DPM1, DPM2 and DPM3; within the complex, directly interacts with DPM3. This interaction may stabilize DPM1. Mg(2+) is required as a cofactor. It depends on Mn(2+) as a cofactor. Ca(2+) serves as cofactor.

It is found in the endoplasmic reticulum. The catalysed reaction is a di-trans,poly-cis-dolichyl phosphate + GDP-alpha-D-mannose = a di-trans,poly-cis-dolichyl beta-D-mannosyl phosphate + GDP. It participates in protein modification; protein glycosylation. Transfers mannose from GDP-mannose to dolichol monophosphate to form dolichol phosphate mannose (Dol-P-Man) which is the mannosyl donor in pathways leading to N-glycosylation, glycosyl phosphatidylinositol membrane anchoring, and O-mannosylation of proteins; catalytic subunit of the dolichol-phosphate mannose (DPM) synthase complex. This chain is Dolichol-phosphate mannosyltransferase subunit 1 (DPM1), found in Bos taurus (Bovine).